The sequence spans 337 residues: tRNA N6-adenosine threonylcarbamoyltransferase (337 aa).

Fe cation-binding residues include histidine 111 and histidine 115. Residues 134-138, aspartate 167, glycine 180, and asparagine 272 contribute to the substrate site; that span reads LVSGG. Aspartate 300 is a Fe cation binding site.

Belongs to the KAE1 / TsaD family. It depends on Fe(2+) as a cofactor.

Its subcellular location is the cytoplasm. It catalyses the reaction L-threonylcarbamoyladenylate + adenosine(37) in tRNA = N(6)-L-threonylcarbamoyladenosine(37) in tRNA + AMP + H(+). In terms of biological role, required for the formation of a threonylcarbamoyl group on adenosine at position 37 (t(6)A37) in tRNAs that read codons beginning with adenine. Is involved in the transfer of the threonylcarbamoyl moiety of threonylcarbamoyl-AMP (TC-AMP) to the N6 group of A37, together with TsaE and TsaB. TsaD likely plays a direct catalytic role in this reaction. This chain is tRNA N6-adenosine threonylcarbamoyltransferase, found in Photorhabdus laumondii subsp. laumondii (strain DSM 15139 / CIP 105565 / TT01) (Photorhabdus luminescens subsp. laumondii).